Consider the following 181-residue polypeptide: Large ribosomal subunit protein bL19 (181 aa).

Positions 162-173 are enriched in basic and acidic residues; the sequence is EKKAAAEAEAAK. The disordered stretch occupies residues 162–181; sequence EKKAAAEAEAAKAAEATPAE.

This sequence belongs to the bacterial ribosomal protein bL19 family.

Its function is as follows. This protein is located at the 30S-50S ribosomal subunit interface and may play a role in the structure and function of the aminoacyl-tRNA binding site. This Mesorhizobium japonicum (strain LMG 29417 / CECT 9101 / MAFF 303099) (Mesorhizobium loti (strain MAFF 303099)) protein is Large ribosomal subunit protein bL19.